Reading from the N-terminus, the 376-residue chain is MDTIININNNNQKYPQSAEEYHKVLCNYFITLQSAMQSTSRPSSSSPPSLPAVSSELLSSSFPTNAPESSSRDLAPKQNQFTINVVLFDEKKKKNPEENLPANGDQLATLRSLMMQINPSSPPSIPATSPQLPLAESENVPESSSTLKDHKFSLNTMLFNVKKNDAVKISLANQEQWAKFHEIGTEMMVFNSGRRLFPLLAYKVSGLDPHKLYCAGVHMIPDSAYKQEYDHDLQQWVNCLNQKKTIFKPTSEILGRIENGFKLMSLGIDMSDVKIFNIAIRKKTPLQIEKSRKPNLDKTIEVLIQYKYLPVIKIYELSNSGMEKKEIAQATFPETSFVTVSIYRNQKIKEMKTLGNKYCRTDRKQIVMEQRGELEQ.

Residues Ser38–Pro63 show a composition bias toward low complexity. The tract at residues Ser38–Pro76 is disordered. The T-box DNA-binding region spans Leu171–Lys364.

It localises to the nucleus. Functionally, transcriptional regulator involved in developmental processes. Directly binds to the promoter region of the sex-determining factor xol-1 to activate its transcription. Its activation of xol-1 transcription controls sex determination and X chromosome dosage compensation to promote male development. Has a role in the fox-1-sex-1-mediated determination of sexual fate. This chain is T-box transcription factor 18, found in Caenorhabditis elegans.